Here is a 148-residue protein sequence, read N- to C-terminus: MSTSSARPAVLALAGLALLLLLCLGPDGISGNKLKKMLQKREGPVPSKTNVAVAENTAKEFLGGLKRAKRQLWDRTRPEVQQWYQQFLYMGFDEAKFEDDVNYWLNRNRNGHDYYGDYYQRHYDEDAAIGPHSRESFRHGASVNYNDY.

Positions 1–31 (MSTSSARPAVLALAGLALLLLLCLGPDGISG) are cleaved as a signal peptide. Propeptides lie at residues 32-70 (NKLK…RAKR) and 133-148 (SRES…YNDY).

The protein belongs to the augurin family. In terms of tissue distribution, expressed in the intermediate lobe of pituitary, glomerular layer of adrenal cortex, choroid plexus and atrioventricular node of the heart. Expressed in the brain with high expression in the choroid plexus and the epithelial lining of the central canal and expression in the gray matter of the spinal cord (at protein level).

The protein localises to the secreted. It is found in the cytoplasm. The protein resides in the apical cell membrane. Its function is as follows. Probable hormone that may attenuate cell proliferation and induce senescence of oligodendrocyte and neural precursor cells in the central nervous system. ECRG4-induced senescence is characterized by G1 arrest, RB1 dephosphorylation and accelerated CCND1 and CCND3 proteasomal degradation. In Mus musculus (Mouse), this protein is Augurin.